The chain runs to 322 residues: uncharacterized protein (322 aa).

Residues 269–289 form a disordered region; it reads QDEEEEPRDERRPRRRLGKAQ.

This is an uncharacterized protein from Sinorhizobium fredii (strain NBRC 101917 / NGR234).